A 355-amino-acid chain; its full sequence is Holliday junction branch migration complex subunit RuvB (355 aa).

The interval 1–26 is disordered; it reads MSIQTDDFASSSPAARRVVSTAPASP. Residues 5-196 are large ATPase domain (RuvB-L); it reads TDDFASSSPA…FGIVARLEFY (192 aa). Positions 9–22 are enriched in low complexity; the sequence is ASSSPAARRVVSTA. ATP is bound by residues L35, R36, G77, K80, T81, T82, 143–145, R186, Y196, and R233; that span reads EDY. A Mg(2+)-binding site is contributed by T81. A small ATPAse domain (RuvB-S) region spans residues 197–267; that stretch reads SVEELARIVT…IADKALAMLD (71 aa). The head domain (RuvB-H) stretch occupies residues 270–355; that stretch reads PQGFDVMDRK…TTSGSELFDA (86 aa). Residues R325 and R330 each coordinate DNA.

It belongs to the RuvB family. Homohexamer. Forms an RuvA(8)-RuvB(12)-Holliday junction (HJ) complex. HJ DNA is sandwiched between 2 RuvA tetramers; dsDNA enters through RuvA and exits via RuvB. An RuvB hexamer assembles on each DNA strand where it exits the tetramer. Each RuvB hexamer is contacted by two RuvA subunits (via domain III) on 2 adjacent RuvB subunits; this complex drives branch migration. In the full resolvosome a probable DNA-RuvA(4)-RuvB(12)-RuvC(2) complex forms which resolves the HJ.

It localises to the cytoplasm. The enzyme catalyses ATP + H2O = ADP + phosphate + H(+). The RuvA-RuvB-RuvC complex processes Holliday junction (HJ) DNA during genetic recombination and DNA repair, while the RuvA-RuvB complex plays an important role in the rescue of blocked DNA replication forks via replication fork reversal (RFR). RuvA specifically binds to HJ cruciform DNA, conferring on it an open structure. The RuvB hexamer acts as an ATP-dependent pump, pulling dsDNA into and through the RuvAB complex. RuvB forms 2 homohexamers on either side of HJ DNA bound by 1 or 2 RuvA tetramers; 4 subunits per hexamer contact DNA at a time. Coordinated motions by a converter formed by DNA-disengaged RuvB subunits stimulates ATP hydrolysis and nucleotide exchange. Immobilization of the converter enables RuvB to convert the ATP-contained energy into a lever motion, pulling 2 nucleotides of DNA out of the RuvA tetramer per ATP hydrolyzed, thus driving DNA branch migration. The RuvB motors rotate together with the DNA substrate, which together with the progressing nucleotide cycle form the mechanistic basis for DNA recombination by continuous HJ branch migration. Branch migration allows RuvC to scan DNA until it finds its consensus sequence, where it cleaves and resolves cruciform DNA. This chain is Holliday junction branch migration complex subunit RuvB, found in Methylibium petroleiphilum (strain ATCC BAA-1232 / LMG 22953 / PM1).